The primary structure comprises 221 residues: Deoxyribose-phosphate aldolase (221 aa).

Aspartate 91 acts as the Proton donor/acceptor in catalysis. The active-site Schiff-base intermediate with acetaldehyde is the lysine 153. The active-site Proton donor/acceptor is the lysine 182.

This sequence belongs to the DeoC/FbaB aldolase family. DeoC type 1 subfamily.

It localises to the cytoplasm. It catalyses the reaction 2-deoxy-D-ribose 5-phosphate = D-glyceraldehyde 3-phosphate + acetaldehyde. It participates in carbohydrate degradation; 2-deoxy-D-ribose 1-phosphate degradation; D-glyceraldehyde 3-phosphate and acetaldehyde from 2-deoxy-alpha-D-ribose 1-phosphate: step 2/2. Its function is as follows. Catalyzes a reversible aldol reaction between acetaldehyde and D-glyceraldehyde 3-phosphate to generate 2-deoxy-D-ribose 5-phosphate. The polypeptide is Deoxyribose-phosphate aldolase (Clostridium botulinum (strain Alaska E43 / Type E3)).